Consider the following 287-residue polypeptide: MTMMDMNFKYCHKIMKKHSKSFSYAFDLLPEDQRKAVWAIYAVCRKIDDSIDVYGDIQFLNQIKEDIQSIEKYPYEHHHFQSDRRIMMALQHVAQHKNIAFQSFYNLIDTVYKDQHFTMFETDAELFGYCYGVAGTVGEVLTPILSDHETHQTYDVARRLGESLQLINILRDVGEDFENERIYFSKQRLKQYEVDIAEVYQNGVNNHYIDLWEYYAAIAEKDFRDVMDQIKVFSIEAQPIIELAARIYIEILDEVRQASYTLHERVFVYKRKKAKLFHEINSKYHRI.

(2E,6E)-farnesyl diphosphate-binding positions include 18 to 21 (HSKS), Y41, and R45. D48 and D52 together coordinate Mg(2+). Q165 is a binding site for (2E,6E)-farnesyl diphosphate. N168 is a Mg(2+) binding site. R171 provides a ligand contact to (2E,6E)-farnesyl diphosphate. D172 is a Mg(2+) binding site. A (2E,6E)-farnesyl diphosphate-binding site is contributed by Y248.

This sequence belongs to the phytoene/squalene synthase family. CrtM subfamily. Requires Mg(2+) as cofactor.

It catalyses the reaction 2 (2E,6E)-farnesyl diphosphate = 15-cis-4,4'-diapophytoene + 2 diphosphate. Its pathway is carotenoid biosynthesis; staphyloxanthin biosynthesis; staphyloxanthin from farnesyl diphosphate: step 1/5. Involved in the biosynthesis of the yellow-orange carotenoid staphyloxanthin, which plays a role in the virulence via its protective function against oxidative stress. Catalyzes the head-to-head condensation of two molecules of farnesyl diphosphate (FPP) into the colorless C(30) carotenoid 4,4'-diapophytoene (dehydrosqualene). In Staphylococcus aureus (strain bovine RF122 / ET3-1), this protein is 4,4'-diapophytoene synthase (crtM).